The primary structure comprises 180 residues: Shikimate kinase (180 aa).

Residue 14-19 (GAGKSS) participates in ATP binding. Mg(2+) is bound at residue serine 18. Aspartate 36, arginine 60, and glycine 82 together coordinate substrate. Arginine 120 contacts ATP. Arginine 139 is a binding site for substrate.

It belongs to the shikimate kinase family. Monomer. Requires Mg(2+) as cofactor.

The protein localises to the cytoplasm. It catalyses the reaction shikimate + ATP = 3-phosphoshikimate + ADP + H(+). The protein operates within metabolic intermediate biosynthesis; chorismate biosynthesis; chorismate from D-erythrose 4-phosphate and phosphoenolpyruvate: step 5/7. Its function is as follows. Catalyzes the specific phosphorylation of the 3-hydroxyl group of shikimic acid using ATP as a cosubstrate. The polypeptide is Shikimate kinase (Xylella fastidiosa (strain M23)).